We begin with the raw amino-acid sequence, 534 residues long: GMP synthase [glutamine-hydrolyzing] (534 aa).

In terms of domain architecture, Glutamine amidotransferase type-1 spans 20–210; the sequence is MLIILDFGSQ…VYHICDCEPT (191 aa). Residue Cys-97 is the Nucleophile of the active site. Residues His-184 and Glu-186 contribute to the active site. The GMPS ATP-PPase domain maps to 211-409; that stretch reads WTTETFVEEA…LGLPEEIVKR (199 aa). 238-244 contacts ATP; it reads SGGVDSS.

As to quaternary structure, homodimer.

It carries out the reaction XMP + L-glutamine + ATP + H2O = GMP + L-glutamate + AMP + diphosphate + 2 H(+). The protein operates within purine metabolism; GMP biosynthesis; GMP from XMP (L-Gln route): step 1/1. Catalyzes the synthesis of GMP from XMP. In Synechococcus sp. (strain ATCC 27144 / PCC 6301 / SAUG 1402/1) (Anacystis nidulans), this protein is GMP synthase [glutamine-hydrolyzing].